The sequence spans 427 residues: Thyroid hormone receptor alpha-A (427 aa).

Residues 1–11 (MENTEQEHNLP) show a composition bias toward basic and acidic residues. The tract at residues 1-40 (MENTEQEHNLPEGDETQWPNGVKRKRKNSQCSMNSTSDKS) is disordered. Residues 1–56 (MENTEQEHNLPEGDETQWPNGVKRKRKNSQCSMNSTSDKSISVPGYVPSYLEKDEP) are modulating. Positions 29-40 (SQCSMNSTSDKS) are enriched in polar residues. NR C4-type zinc fingers lie at residues 57–77 (CVVC…CEGC) and 95–119 (CKYD…FRKC). A DNA-binding region (nuclear receptor) is located at residues 57–131 (CVVCGDKATG…VGMAMDLVLD (75 aa)). The NR LBD domain occupies 167–410 (SEWELIRMVT…PPLFLEVFED (244 aa)).

Belongs to the nuclear hormone receptor family. NR1 subfamily. Interacts with ncoa2. In terms of tissue distribution, after the mid-blastula transition (MBT), expressed throughout the deep cells, which give rise to the embryo proper. In adults, isoform 2 shows highest expression in the eye and liver. Expressed in adult gonads.

It localises to the nucleus. In terms of biological role, high affinity receptor for triiodothyronine. In the absence of thyroid hormone during late blastula stage development, acts as a transcriptional repressor. Whereas in the presence of thyroid hormone, can act as an activator of transcription. In addition, represses retinoic acid (RA)-signaling during blastula and gastrula stages of development. The chain is Thyroid hormone receptor alpha-A (thraa) from Danio rerio (Zebrafish).